Here is a 449-residue protein sequence, read N- to C-terminus: Phosphoglucosamine mutase (449 aa).

Ser100 acts as the Phosphoserine intermediate in catalysis. Residues Ser100, Asp241, Asp243, and Asp245 each contribute to the Mg(2+) site. At Ser100 the chain carries Phosphoserine.

The protein belongs to the phosphohexose mutase family. Mg(2+) serves as cofactor. Post-translationally, activated by phosphorylation.

The enzyme catalyses alpha-D-glucosamine 1-phosphate = D-glucosamine 6-phosphate. In terms of biological role, catalyzes the conversion of glucosamine-6-phosphate to glucosamine-1-phosphate. The sequence is that of Phosphoglucosamine mutase from Clostridium kluyveri (strain NBRC 12016).